We begin with the raw amino-acid sequence, 395 residues long: S-adenosylmethionine synthase (395 aa).

His-16 is a binding site for ATP. Asp-18 contributes to the Mg(2+) binding site. Position 44 (Glu-44) interacts with K(+). Residues Glu-57 and Gln-100 each contribute to the L-methionine site. The segment at 100-110 (QSPDIAQGVDR) is flexible loop. ATP contacts are provided by residues 167–169 (DAK), 233–234 (RF), Asp-242, 248–249 (RK), Ala-265, and Lys-269. Asp-242 serves as a coordination point for L-methionine. Lys-273 contributes to the L-methionine binding site.

This sequence belongs to the AdoMet synthase family. As to quaternary structure, homotetramer; dimer of dimers. Requires Mg(2+) as cofactor. K(+) is required as a cofactor.

It localises to the cytoplasm. The enzyme catalyses L-methionine + ATP + H2O = S-adenosyl-L-methionine + phosphate + diphosphate. It functions in the pathway amino-acid biosynthesis; S-adenosyl-L-methionine biosynthesis; S-adenosyl-L-methionine from L-methionine: step 1/1. Its function is as follows. Catalyzes the formation of S-adenosylmethionine (AdoMet) from methionine and ATP. The overall synthetic reaction is composed of two sequential steps, AdoMet formation and the subsequent tripolyphosphate hydrolysis which occurs prior to release of AdoMet from the enzyme. The protein is S-adenosylmethionine synthase of Burkholderia ambifaria (strain MC40-6).